The sequence spans 100 residues: MIREERLLKVLRAPHVSEKASIAMEKSNTIVLKVAKDATKAEIKAAVQKLFEVEVESVNTLLMKGKVKRHGQRIGRRSDWKKAYVTLKEGQNLDFVGGAE.

It belongs to the universal ribosomal protein uL23 family. As to quaternary structure, part of the 50S ribosomal subunit. Contacts protein L29, and trigger factor when it is bound to the ribosome.

Its function is as follows. One of the early assembly proteins it binds 23S rRNA. One of the proteins that surrounds the polypeptide exit tunnel on the outside of the ribosome. Forms the main docking site for trigger factor binding to the ribosome. The chain is Large ribosomal subunit protein uL23 from Proteus mirabilis (strain HI4320).